The sequence spans 393 residues: uncharacterized protein (393 aa).

Positions 250 to 389 (AVIVYDTMYN…KCYEFGKRLA (140 aa)) constitute a Flavodoxin-like domain.

This is an uncharacterized protein from Methanocaldococcus jannaschii (strain ATCC 43067 / DSM 2661 / JAL-1 / JCM 10045 / NBRC 100440) (Methanococcus jannaschii).